We begin with the raw amino-acid sequence, 520 residues long: Sodium-dependent dicarboxylate transporter SdcS (520 aa).

The next 14 membrane-spanning stretches (helical) occupy residues 30-50, 55-75, 77-97, 104-124, 160-180, 207-227, 242-262, 298-318, 323-343, 362-382, 399-419, 428-448, 452-472, and 491-511; these read TGQLIGLILGPLLFLLTLLFF, LPWKGVYVLAITLWIATWWIT, AIPIAATSLLPIVLLPLGHIL, SEYGNDIIFLFLGGFILAIAM, SMFVSNTAAVMIMIPIGLAII, IGYAGTIGGLGTLIGTPPLII, FAKWMIVGIPTVIVLLGITWL, KVVQTIFVLASLLWITREFLL, VTSSVADGTIAIFISILLFII, ELPWGVLILFGGGLALAKGIS, GVSPILIVIVITIFVLFLTEV, MILPILATLSVAVGVHPLLLM, AMAANCAYMLPVGTPPNAIIF, and LISAIIIILVVYYIMPIVLGI.

Belongs to the SLC13A/DASS transporter (TC 2.A.47) family. NADC subfamily.

Its subcellular location is the cell membrane. Functionally, mediates the transport of the dicarboxylates fumarate, malate, and succinate across the cytoplasmic membrane via a Na(+)-electrochemical gradient. This chain is Sodium-dependent dicarboxylate transporter SdcS (sdcS), found in Staphylococcus aureus (strain MRSA252).